The following is a 355-amino-acid chain: Protein RecA (355 aa).

An ATP-binding site is contributed by G65–T72.

The protein belongs to the RecA family.

It localises to the cytoplasm. In terms of biological role, can catalyze the hydrolysis of ATP in the presence of single-stranded DNA, the ATP-dependent uptake of single-stranded DNA by duplex DNA, and the ATP-dependent hybridization of homologous single-stranded DNAs. It interacts with LexA causing its activation and leading to its autocatalytic cleavage. The sequence is that of Protein RecA from Pseudomonas putida (strain ATCC 47054 / DSM 6125 / CFBP 8728 / NCIMB 11950 / KT2440).